We begin with the raw amino-acid sequence, 800 residues long: Phosphoinositide 3-kinase adapter protein 1 (800 aa).

The TIR domain occupies 8–145 (GGYDVLILYA…AVKKAISEDS (138 aa)). The segment at 10–144 (YDVLILYASD…EAVKKAISED (135 aa)) is necessary and sufficient to mediate inhibition of NF-kappa-B downstream of activated TLRs. The 137-residue stretch at 185–321 (VQPDHIRCGV…NIPASGLHLF (137 aa)) folds into the DBB domain. Phosphotyrosine is present on Tyr266. 3 positions are modified to phosphotyrosine; by SYK: Tyr423, Tyr448, and Tyr463. Residues 527–548 (EMASRPPVPVPRPESSSPQPDN) form a disordered region. Residues 643 to 663 (QQENLKRLRDSITRRQMEKQK) adopt a coiled-coil conformation. Over residues 702-713 (PKKELKRGDWKT) the composition is skewed to basic and acidic residues. The segment at 702 to 800 (PKKELKRGDW…YPPPVPPRGR (99 aa)) is disordered. Residues 714 to 737 (ESTSSTTSSASNRSSTRSILSVSS) show a composition bias toward low complexity. A compositionally biased stretch (polar residues) spans 749-759 (SEASRSRSPIP). Pro residues-rich tracts occupy residues 767–777 (LPLPERPPRVP) and 791–800 (YPPPVPPRGR).

As to quaternary structure, homooligomer. Interacts (phosphorylated on tyrosine residues within YXXM motifs) with PIK3R1 (via SH2 domain); required for BCR- and TLR-mediated activation of phosphoinositide 3-kinase. In terms of processing, constitutively phosphorylated. Phosphorylated on tyrosine residues within the YXXM motifs by BTK and SYK. Isoform 1 and isoform 2 are phosphorylated on tyrosine residues, most likely within the YXXM motifs, via CD19 activation.

It is found in the cytoplasm. It localises to the cell membrane. Signaling adapter that contributes to B-cell development by linking B-cell receptor (BCR) signaling to the phosphoinositide 3-kinase (PI3K)-Akt signaling pathway. Has a complementary role to the BCR coreceptor CD19, coupling BCR and PI3K activation by providing a docking site for the PI3K subunit PIK3R1. Alternatively, links Toll-like receptor (TLR) signaling to PI3K activation, a process preventing excessive inflammatory cytokine production. Also involved in the activation of PI3K in natural killer cells. May be involved in the survival of mature B-cells via activation of REL. In Gallus gallus (Chicken), this protein is Phosphoinositide 3-kinase adapter protein 1 (PIK3AP1).